Here is a 172-residue protein sequence, read N- to C-terminus: Ribosome maturation factor RimM (172 aa).

In terms of domain architecture, PRC barrel spans proline 98–leucine 171.

The protein belongs to the RimM family. Binds ribosomal protein uS19.

It localises to the cytoplasm. In terms of biological role, an accessory protein needed during the final step in the assembly of 30S ribosomal subunit, possibly for assembly of the head region. Essential for efficient processing of 16S rRNA. May be needed both before and after RbfA during the maturation of 16S rRNA. It has affinity for free ribosomal 30S subunits but not for 70S ribosomes. The chain is Ribosome maturation factor RimM from Levilactobacillus brevis (strain ATCC 367 / BCRC 12310 / CIP 105137 / JCM 1170 / LMG 11437 / NCIMB 947 / NCTC 947) (Lactobacillus brevis).